Consider the following 284-residue polypeptide: MFNGFRFNGNRIGDRRWFCGGGGEPVTGTNVRAMDRSQEKEAIKSPIPPAIRVRELSFAYGGQTPVLNNLAWQVAPGERLGIIGHNGCGKTTLFLLLCGLLKASAGTIQLLGQALEAGKFLPEVGFLFQNPTDQLFATSVWDDIAFGPQNMGLSPAQVTERVNQAAELTGITSLLDRLPQHLSGGEKQMVAIAGLLAMAPKILLCDEPTASLDIKARRQLINFLGQFQQTLLISSHDLEFVLEVCNRVIIIDQGQIVADGPAQEIMADQTLMESHGLEKPYSLR.

The ABC transporter domain maps to 51–278 (IRVRELSFAY…QTLMESHGLE (228 aa)). ATP is bound at residue 84-91 (GHNGCGKT).

It belongs to the ABC transporter superfamily.

The protein resides in the cell inner membrane. In terms of biological role, probably part of an ABC transporter complex. Responsible for energy coupling to the transport system. In Synechocystis sp. (strain ATCC 27184 / PCC 6803 / Kazusa), this protein is Putative ABC transporter ATP-binding protein sll0385.